The chain runs to 201 residues: Ribosome maturation factor RimM (201 aa).

One can recognise a PRC barrel domain in the interval 94–168 (EDEYYHADLI…RLVADPPLGL (75 aa)). The segment at 164 to 201 (PPLGLLDDTRPPAGVEGEVEEDPGVGIDEDGDGKGGAS) is disordered. Residues 180–194 (GEVEEDPGVGIDEDG) show a composition bias toward acidic residues.

It belongs to the RimM family. Binds ribosomal protein uS19.

Its subcellular location is the cytoplasm. An accessory protein needed during the final step in the assembly of 30S ribosomal subunit, possibly for assembly of the head region. Essential for efficient processing of 16S rRNA. May be needed both before and after RbfA during the maturation of 16S rRNA. It has affinity for free ribosomal 30S subunits but not for 70S ribosomes. This chain is Ribosome maturation factor RimM, found in Rhodospirillum rubrum (strain ATCC 11170 / ATH 1.1.1 / DSM 467 / LMG 4362 / NCIMB 8255 / S1).